A 136-amino-acid chain; its full sequence is Histone H3.2 (136 aa).

Positions 1-42 (MARTKQTARKSTGGKAPRKQLATKAARKSAPSAGGVKKPHRY) are disordered. Lys5 carries the post-translational modification N6,N6,N6-trimethyllysine; alternate. The residue at position 5 (Lys5) is an N6,N6-dimethyllysine; alternate. N6-methyllysine; alternate occurs at positions 5 and 10. Lys10 is modified (N6-acetyllysine; alternate). Ser11 bears the Phosphoserine mark. Lys15 is modified (N6,N6-dimethyllysine; alternate). Residues Lys15, Lys19, Lys24, Lys28, and Lys37 each carry the N6-acetyllysine; alternate modification. N6-methyllysine; alternate is present on residues Lys19, Lys24, Lys28, and Lys37. An N6,N6,N6-trimethyllysine; alternate mark is found at Lys28 and Lys37. Residues Lys28 and Lys37 each carry the N6,N6-dimethyllysine; alternate modification. An N6-acetyllysine mark is found at Lys57 and Lys65. The residue at position 80 (Lys80) is an N6,N6,N6-trimethyllysine; alternate. N6,N6-dimethyllysine; alternate is present on Lys80. N6-methyllysine; alternate is present on Lys80.

The protein belongs to the histone H3 family. In terms of assembly, the nucleosome is a histone octamer containing two molecules each of H2A, H2B, H3 and H4 assembled in one H3-H4 heterotetramer and two H2A-H2B heterodimers. The octamer wraps approximately 147 bp of DNA. Phosphorylated to form H3S10ph. H3S10ph promotes subsequent H3K14ac formation and is required for transcriptional activation through TBP recruitment to the promoters. In terms of processing, mono-, di- and trimethylated by the COMPASS complex to form H3K4me1/2/3. H3K4me activates gene expression by regulating transcription elongation and plays a role in telomere length maintenance. H3K4me enrichment correlates with transcription levels, and occurs in a 5' to 3' gradient with H3K4me3 enrichment at the 5'-end of genes, shifting to H3K4me2 and then H3K4me1. Methylated by SET2 to form H3K36me. H3K36me represses gene expression. Methylated by DOT1 to form H3K79me. H3K79me is required for association of SIR proteins with telomeric regions and for telomeric silencing. The COMPASS-mediated formation of H3K4me2/3 and the DOT1-mediated formation of H3K79me require H2BK123ub1. Post-translationally, acetylation of histone H3 leads to transcriptional activation. H3K14ac formation by GCN5 is promoted by H3S10ph. H3K14ac can also be formed by ESA1. H3K56ac formation occurs predominantly in newly synthesized H3 molecules during G1, S and G2/M of the cell cycle and may be involved in DNA repair.

It is found in the nucleus. The protein localises to the chromosome. In terms of biological role, core component of nucleosome. Nucleosomes wrap and compact DNA into chromatin, limiting DNA accessibility to the cellular machineries which require DNA as a template. Histones thereby play a central role in transcription regulation, DNA repair, DNA replication and chromosomal stability. DNA accessibility is regulated via a complex set of post-translational modifications of histones, also called histone code, and nucleosome remodeling. The polypeptide is Histone H3.2 (HHT2) (Mycosarcoma maydis (Corn smut fungus)).